The following is a 59-amino-acid chain: Cuticle protein 7 isoform c (59 aa).

Residue Gln-1 is modified to Pyrrolidone carboxylic acid.

The chain is Cuticle protein 7 isoform c from Limulus polyphemus (Atlantic horseshoe crab).